Reading from the N-terminus, the 141-residue chain is Large ribosomal subunit protein uL11 (141 aa).

This sequence belongs to the universal ribosomal protein uL11 family. In terms of assembly, part of the ribosomal stalk of the 50S ribosomal subunit. Interacts with L10 and the large rRNA to form the base of the stalk. L10 forms an elongated spine to which L12 dimers bind in a sequential fashion forming a multimeric L10(L12)X complex. One or more lysine residues are methylated.

Forms part of the ribosomal stalk which helps the ribosome interact with GTP-bound translation factors. This is Large ribosomal subunit protein uL11 from Chloroflexus aurantiacus (strain ATCC 29366 / DSM 635 / J-10-fl).